A 428-amino-acid polypeptide reads, in one-letter code: GTPase HflX (428 aa).

The Hflx-type G domain occupies 214–374; that stretch reads PVVAIVGYTN…AIERELFKET (161 aa). GTP is bound by residues 220 to 227, 245 to 249, 267 to 270, 333 to 336, and 352 to 354; these read GYTNAGKS, FATLD, DTVG, NKID, and SAK. Mg(2+)-binding residues include Ser-227 and Thr-247.

This sequence belongs to the TRAFAC class OBG-HflX-like GTPase superfamily. HflX GTPase family. Monomer. Associates with the 50S ribosomal subunit. Mg(2+) is required as a cofactor.

Its subcellular location is the cytoplasm. Functionally, GTPase that associates with the 50S ribosomal subunit and may have a role during protein synthesis or ribosome biogenesis. The protein is GTPase HflX of Caldanaerobacter subterraneus subsp. tengcongensis (strain DSM 15242 / JCM 11007 / NBRC 100824 / MB4) (Thermoanaerobacter tengcongensis).